The sequence spans 84 residues: Gas vesicle protein M1 (84 aa).

Residues 1-25 are interacts with GvpL1; it reads MEPTKDETHAIVEFVDVLLRDGAVI. The segment at 5-21 is alpha helix 1; the sequence is KDETHAIVEFVDVLLRD. Beta-strand regions lie at residues 27-29 and 41-43; these read ADV and ISL. The short motif at 44 to 48 is the Conserved in GvpJ1/2 but not GvpA element; the sequence is RAAIA. Alpha helix stretches follow at residues 46 to 56 and 62 to 84; these read AIAGMTTMTEY and WDAA…RRED.

This sequence belongs to the gas vesicle GvpA family. In terms of assembly, gvpF to GvpM interact with each other in vitro, and may form multi-subunit complex(es). Might interact with GvpA1.

It localises to the gas vesicle. Its function is as follows. Proteins GvpF to GvpM might be involved in nucleating gas vesicle formation. A minor component of the gas vesicle. Gas vesicles are hollow, gas filled proteinaceous nanostructures found in several microbial planktonic microorganisms. They allow positioning of halobacteria at the optimal depth for growth in the poorly aerated, shallow brine pools of their habitat. In terms of biological role, expression of a 9.5 kb p-vac DNA fragment containing 2 divergently transcribed regions (gvpD-gvpE-gvpF-gvpG-gvpH-gvpI-gvpJ-gvpK-gvpL-gvpM and gvpA-gvpC-gvpN-gvpO) allows H.volcanii to produce gas vesicles. All site-directed mutagenesis is tested in H.volcanii. A minimal gas vesicle can be made in H.volcanii by gvpA1-gvpO1 plus gvpF1-gvpG1-gvpJ1-gvpK1-gvpL1-gvpM1; lack of enough GvpJ1 prevents formation. A similar region restores gas vesicle production in H.halobium without the p-vac locus, but it still has the c-vac locus. This Halobacterium salinarum (strain ATCC 700922 / JCM 11081 / NRC-1) (Halobacterium halobium) protein is Gas vesicle protein M1 (gvpM11).